Reading from the N-terminus, the 256-residue chain is uncharacterized protein (256 aa).

The first 22 residues, 1–22, serve as a signal peptide directing secretion; sequence MGYLKRIGMCISLLIVIIFVTS. The N-palmitoyl cysteine moiety is linked to residue Cys23. Cys23 carries S-diacylglycerol cysteine lipidation.

Belongs to the staphylococcal tandem lipoprotein family.

Its subcellular location is the cell membrane. This is an uncharacterized protein from Staphylococcus aureus (strain MSSA476).